The chain runs to 302 residues: RELT-like protein 2 (302 aa).

The helical transmembrane segment at 15–35 (LYMLFLLVLVFFLMGLVGFMI) threads the bilayer. 4 disordered regions span residues 47–68 (RTSRGSEPDDAQLQPPEDDDVN), 135–164 (CSRSKRPPLVRQGRSKEGKGRPRPGETTVF), 177–212 (RYGLHEHRDGSPTDRSWGSGGGQEPGVSQVAGGQPR), and 247–302 (VPCT…AGGM). Phosphoserine is present on Ser-52. 2 stretches are compositionally biased toward basic and acidic residues: residues 148-158 (RSKEGKGRPRP) and 177-188 (RYGLHEHRDGSP). The segment covering 277-294 (QEANGQPTKLDTSGQQDS) has biased composition (polar residues).

Belongs to the RELT family. In terms of assembly, interacts with RELT, RELL1, OXSR1, PLSCR1 and TRAF2.

It is found in the cell membrane. Its function is as follows. Induces activation of MAPK14/p38 cascade, when overexpressed. Induces apoptosis, when overexpressed. The polypeptide is RELT-like protein 2 (Rell2) (Rattus norvegicus (Rat)).